Here is a 346-residue protein sequence, read N- to C-terminus: Fe(3+) ions import ATP-binding protein FbpC 2 (346 aa).

Residues Leu5–Ile235 enclose the ABC transporter domain. Gly37–Thr44 is a binding site for ATP.

This sequence belongs to the ABC transporter superfamily. Fe(3+) ion importer (TC 3.A.1.10) family. In terms of assembly, the complex is composed of two ATP-binding proteins (FbpC), two transmembrane proteins (FbpB) and a solute-binding protein (FbpA).

Its subcellular location is the cell membrane. The enzyme catalyses Fe(3+)(out) + ATP + H2O = Fe(3+)(in) + ADP + phosphate + H(+). Part of the ABC transporter complex FbpABC involved in Fe(3+) ions import. Responsible for energy coupling to the transport system. In Rhodococcus jostii (strain RHA1), this protein is Fe(3+) ions import ATP-binding protein FbpC 2.